Here is a 216-residue protein sequence, read N- to C-terminus: Probable nicotinate-nucleotide adenylyltransferase (216 aa).

This sequence belongs to the NadD family.

The enzyme catalyses nicotinate beta-D-ribonucleotide + ATP + H(+) = deamido-NAD(+) + diphosphate. Its pathway is cofactor biosynthesis; NAD(+) biosynthesis; deamido-NAD(+) from nicotinate D-ribonucleotide: step 1/1. Its function is as follows. Catalyzes the reversible adenylation of nicotinate mononucleotide (NaMN) to nicotinic acid adenine dinucleotide (NaAD). The polypeptide is Probable nicotinate-nucleotide adenylyltransferase (Geobacillus thermodenitrificans (strain NG80-2)).